The following is a 352-amino-acid chain: Rhodopsin (352 aa).

Over 1-36 the chain is Extracellular; it reads MNGTEGPFFYIPMVNTTGVVRSPYEYPQYYLVNPAA. N-linked (GlcNAc...) asparagine glycosylation is found at Asn2 and Asn15. The chain crosses the membrane as a helical span at residues 37–61; it reads YACLGAYMFFLILVGFPVNFLTLYV. Topologically, residues 62-73 are cytoplasmic; sequence TLEHKKLRTPLN. A helical membrane pass occupies residues 74-96; that stretch reads YILLNLAVADLFMVFGGFTTTIY. At 97 to 110 the chain is on the extracellular side; that stretch reads TSMHGYFVLGRLGC. An intrachain disulfide couples Cys110 to Cys187. Residues 111–133 form a helical membrane-spanning segment; the sequence is NIEGFFATLGGEIALWSLVVLAI. Residues 134–136 carry the 'Ionic lock' involved in activated form stabilization motif; the sequence is ERW. Residues 134–152 lie on the Cytoplasmic side of the membrane; sequence ERWVVVCKPISNFRFGENH. Residues 153–173 form a helical membrane-spanning segment; the sequence is AIMGVAFTWFMASACAVPPLV. The Extracellular segment spans residues 174 to 202; the sequence is GWSRYIPEGMQCSCGIDYYTRAEGFNNES. An N-linked (GlcNAc...) asparagine glycan is attached at Asn200. Residues 203-224 traverse the membrane as a helical segment; that stretch reads FVIYMFTVHFCIPLAVVGFCYG. Over 225 to 252 the chain is Cytoplasmic; it reads RLLCAVKEAAAAQQESETTQRAEREVSR. The helical transmembrane segment at 253 to 274 threads the bilayer; it reads MVVIMVIGFLVCWLPYASVAWY. The Extracellular portion of the chain corresponds to 275-286; it reads IFTHQGSEFGPL. The chain crosses the membrane as a helical span at residues 287 to 308; that stretch reads FMTIPAFFAKSSSIYNPMIYIC. An N6-(retinylidene)lysine modification is found at Lys296. Over 309–352 the chain is Cytoplasmic; it reads MNKQFRHCMITTLCCGKNPFEEEEGASTTKTEASSVSSSSVSPA. 2 S-palmitoyl cysteine lipidation sites follow: Cys322 and Cys323. A disordered region spans residues 331–352; sequence EEGASTTKTEASSVSSSSVSPA. The segment covering 342 to 352 has biased composition (low complexity); it reads SSVSSSSVSPA.

This sequence belongs to the G-protein coupled receptor 1 family. Opsin subfamily. Phosphorylated on some or all of the serine and threonine residues present in the C-terminal region. Post-translationally, contains one covalently linked retinal chromophore.

It is found in the membrane. The protein resides in the cell projection. The protein localises to the cilium. It localises to the photoreceptor outer segment. In terms of biological role, photoreceptor required for image-forming vision at low light intensity. While most salt water fish species use retinal as chromophore, most freshwater fish use 3-dehydroretinal, or a mixture of retinal and 3-dehydroretinal. Light-induced isomerization of 11-cis to all-trans retinal triggers a conformational change that activates signaling via G-proteins. Subsequent receptor phosphorylation mediates displacement of the bound G-protein alpha subunit by arrestin and terminates signaling. The sequence is that of Rhodopsin (rho) from Gobius niger (Black goby).